A 284-amino-acid polypeptide reads, in one-letter code: Cell wall mannoprotein 1 (284 aa).

A signal peptide spans 1–17; it reads MRFSALLVTLGLTGALA. The segment covering 176–234 has biased composition (low complexity); it reads SSTGTASSSAPATETATATETSTATGTVTETATSTPVIPTGTASGSASATPSTTATPTT. Residues 176-252 form a disordered region; sequence SSTGTASSSA…SSTGTATAST (77 aa).

The protein belongs to the cell wall mannoprotein 1 family. Galactomannoprotein, glycosylated.

It is found in the secreted. Its subcellular location is the cell wall. Constitutive protein of the cell wall. Antigen target of host humoral immune response. This chain is Cell wall mannoprotein 1, found in Aspergillus fumigatus (Neosartorya fumigata).